The chain runs to 309 residues: Golgi to ER traffic protein 4 homolog (309 aa).

The tract at residues 290–309 is disordered; it reads SGGGLASMEVDGPTIEDEMD.

This sequence belongs to the GET4 family.

Functionally, may play a role in insertion of tail-anchored proteins into the endoplasmic reticulum membrane. This chain is Golgi to ER traffic protein 4 homolog, found in Dictyostelium discoideum (Social amoeba).